A 138-amino-acid polypeptide reads, in one-letter code: Calmodulin-beta (138 aa).

EF-hand domains follow at residues 1–32 (EFKEAFSLFDKDGDGTITTKELGTVMRSLGQN), 33–68 (PTEAELQDMINEVDADGNGTIDFPEFLTMMARKMKE), 70–105 (DSEEEIREAFRVFDKDGNGFISAAELRHVMTNLGEK), and 106–138 (LTDEEVDEMIREADIDGDGQVNYEEFVAMMTSK). Ca(2+)-binding residues include D10, D12, D14, T16, E21, D46, D48, N50, T52, E57, D83, D85, N87, E94, D119, D121, D123, Q125, and E130.

The protein belongs to the calmodulin family.

Calmodulin mediates the control of a large number of enzymes, ion channels and other proteins by Ca(2+). Among the enzymes to be stimulated by the calmodulin-Ca(2+) complex are a number of protein kinases and phosphatases. The polypeptide is Calmodulin-beta (Arbacia punctulata (Punctuate sea urchin)).